Here is a 383-residue protein sequence, read N- to C-terminus: Homoserine O-succinyltransferase (383 aa).

An AB hydrolase-1 domain is found at 51 to 360 (NAILLCHALS…EAEHGHDSFL (310 aa)). Catalysis depends on S157, which acts as the Nucleophile. R227 is a substrate binding site. Residues D323 and H356 contribute to the active site. D357 serves as a coordination point for substrate.

Belongs to the AB hydrolase superfamily. MetX family. Homodimer.

It localises to the cytoplasm. It carries out the reaction L-homoserine + succinyl-CoA = O-succinyl-L-homoserine + CoA. It functions in the pathway amino-acid biosynthesis; L-methionine biosynthesis via de novo pathway; O-succinyl-L-homoserine from L-homoserine: step 1/1. In terms of biological role, transfers a succinyl group from succinyl-CoA to L-homoserine, forming succinyl-L-homoserine. This chain is Homoserine O-succinyltransferase, found in Acidithiobacillus ferrooxidans (strain ATCC 23270 / DSM 14882 / CIP 104768 / NCIMB 8455) (Ferrobacillus ferrooxidans (strain ATCC 23270)).